The primary structure comprises 337 residues: Glyceraldehyde-3-phosphate dehydrogenase (337 aa).

NAD(+)-binding positions include 12-13 (RI), aspartate 34, and arginine 79. D-glyceraldehyde 3-phosphate contacts are provided by residues 150–152 (SCT), threonine 181, 210–211 (TG), and arginine 233. Cysteine 151 serves as the catalytic Nucleophile. Asparagine 315 lines the NAD(+) pocket.

Belongs to the glyceraldehyde-3-phosphate dehydrogenase family. As to quaternary structure, homotetramer.

The protein localises to the cytoplasm. The catalysed reaction is D-glyceraldehyde 3-phosphate + phosphate + NAD(+) = (2R)-3-phospho-glyceroyl phosphate + NADH + H(+). The protein operates within carbohydrate degradation; glycolysis; pyruvate from D-glyceraldehyde 3-phosphate: step 1/5. The sequence is that of Glyceraldehyde-3-phosphate dehydrogenase (GPD) from Coccidioides posadasii (strain C735) (Valley fever fungus).